The sequence spans 160 residues: Ribosome maturation factor RimP (160 aa).

Belongs to the RimP family.

The protein localises to the cytoplasm. Functionally, required for maturation of 30S ribosomal subunits. In Syntrophus aciditrophicus (strain SB), this protein is Ribosome maturation factor RimP.